Here is a 312-residue protein sequence, read N- to C-terminus: Olfactory receptor 1D2 (312 aa).

Topologically, residues 1–25 (MDGGNQSEGSEFLLLGMSESPEQQR) are extracellular. Asparagine 5 carries an N-linked (GlcNAc...) asparagine glycan. The chain crosses the membrane as a helical span at residues 26–49 (ILFWMFLSMYLVTVVGNVLIILAI). Topologically, residues 50–57 (SSDSCLHT) are cytoplasmic. The chain crosses the membrane as a helical span at residues 58–79 (PMYFFLANLSFTDLFFVTNTIP). Topologically, residues 80-100 (KMLVNLQSQNKAISYAGCLTQ) are extracellular. A disulfide bond links cysteine 97 and cysteine 189. Residues 101 to 120 (LYFLVSLVALDNLILAVMAY) form a helical membrane-spanning segment. The Cytoplasmic portion of the chain corresponds to 121–139 (DRYVAICCPLHYTTAMSPK). Residues 140-158 (LCILLLSLCWVLSVLYGLI) traverse the membrane as a helical segment. Topologically, residues 159–196 (HTLLMTRVTFCGSRKIHYIFCEMYVLLRMACSNIQTNH) are extracellular. A glycan (N-linked (GlcNAc...) asparagine) is linked at asparagine 195. A helical transmembrane segment spans residues 197 to 219 (TVLIATGCFIFLIPFGFVIISYV). Topologically, residues 220 to 236 (LIIRAILRIPSLSKKYK) are cytoplasmic. The helical transmembrane segment at 237-259 (AFSTCASHLGAVSLFYGTLCMVY) threads the bilayer. Topologically, residues 260–271 (LKPLHTYSVKDS) are extracellular. The helical transmembrane segment at 272–291 (VATVMYAVVTPMMNPFIYSL) threads the bilayer. Over 292–312 (RNKDMHGALGRLLDKHFKRLT) the chain is Cytoplasmic.

This sequence belongs to the G-protein coupled receptor 1 family.

The protein resides in the cell membrane. Its function is as follows. Odorant receptor. The sequence is that of Olfactory receptor 1D2 (OR1D2) from Pan troglodytes (Chimpanzee).